The following is a 129-amino-acid chain: Glycine cleavage system H protein (129 aa).

In terms of domain architecture, Lipoyl-binding spans 24 to 106 (LLKIGVSEFA…IGDGWLVILK (83 aa)). Lys-65 bears the N6-lipoyllysine mark.

Belongs to the GcvH family. As to quaternary structure, the glycine cleavage system is composed of four proteins: P, T, L and H. (R)-lipoate is required as a cofactor.

The glycine cleavage system catalyzes the degradation of glycine. The H protein shuttles the methylamine group of glycine from the P protein to the T protein. The protein is Glycine cleavage system H protein of Prochlorococcus marinus (strain MIT 9301).